Reading from the N-terminus, the 477-residue chain is Ubiquitin carboxyl-terminal hydrolase 7 (477 aa).

A Ubiquitin-like domain is found at 2 to 77 (LTVSVKWQKK…LMMMGTADEI (76 aa)). Positions 104 to 473 (AGLVNLGNTC…MAYIVMYKAR (370 aa)) constitute a USP domain. Cys-113 (nucleophile) is an active-site residue. Positions 171–190 (MPFWMVLQKKYPQFAQLHNG) are calmodulin-binding. A disordered region spans residues 364-401 (QASAKSSSKGDDVKMTDAEGSSNQSGESSTGDQQEGAS). Residues 371–380 (SKGDDVKMTD) show a composition bias toward basic and acidic residues. Positions 382 to 399 (EGSSNQSGESSTGDQQEG) are enriched in polar residues. His-425 functions as the Proton acceptor in the catalytic mechanism.

This sequence belongs to the peptidase C19 family. As to quaternary structure, interacts with calmodulin (CaM).

The enzyme catalyses Thiol-dependent hydrolysis of ester, thioester, amide, peptide and isopeptide bonds formed by the C-terminal Gly of ubiquitin (a 76-residue protein attached to proteins as an intracellular targeting signal).. Recognizes and hydrolyzes the peptide bond at the C-terminal Gly of ubiquitin. Involved in the processing of poly-ubiquitin precursors as well as that of ubiquitinated proteins. In Arabidopsis thaliana (Mouse-ear cress), this protein is Ubiquitin carboxyl-terminal hydrolase 7 (UBP7).